The chain runs to 280 residues: 2-dehydro-3-deoxyphosphooctonate aldolase (280 aa).

This sequence belongs to the KdsA family.

It is found in the cytoplasm. It carries out the reaction D-arabinose 5-phosphate + phosphoenolpyruvate + H2O = 3-deoxy-alpha-D-manno-2-octulosonate-8-phosphate + phosphate. The protein operates within carbohydrate biosynthesis; 3-deoxy-D-manno-octulosonate biosynthesis; 3-deoxy-D-manno-octulosonate from D-ribulose 5-phosphate: step 2/3. It functions in the pathway bacterial outer membrane biogenesis; lipopolysaccharide biosynthesis. This chain is 2-dehydro-3-deoxyphosphooctonate aldolase, found in Coxiella burnetii (strain CbuK_Q154) (Coxiella burnetii (strain Q154)).